The chain runs to 142 residues: Translation initiation factor 2 subunit beta (142 aa).

This sequence belongs to the eIF-2-beta/eIF-5 family. Heterotrimer composed of an alpha, a beta and a gamma chain.

Functionally, eIF-2 functions in the early steps of protein synthesis by forming a ternary complex with GTP and initiator tRNA. In Thermococcus gammatolerans (strain DSM 15229 / JCM 11827 / EJ3), this protein is Translation initiation factor 2 subunit beta.